The chain runs to 117 residues: Protein MGF 110-13L (117 aa).

An N-terminal signal peptide occupies residues 1 to 16 (MKLFVLLSILVWLAQP).

It belongs to the asfivirus MGF 110 family.

The polypeptide is Protein MGF 110-13L (Ornithodoros (relapsing fever ticks)).